The chain runs to 690 residues: Eukaryotic translation initiation factor 3 subunit B (690 aa).

Positions 1 to 11 (MAKKKSEEHSG) are enriched in basic and acidic residues. Positions 1 to 36 (MAKKKSEEHSGADANDSDYQEEPNFEDPPGFVDNIS) are disordered. The span at 15–25 (NDSDYQEEPNF) shows a compositional bias: acidic residues. One can recognise an RRM domain in the interval 57–141 (SVVVVDNIPK…HTFAVNLFTD (85 aa)). WD repeat units lie at residues 207-246 (TRER…KIQK), 293-331 (DGMS…LLDL), 334-369 (IKIP…TLME), 442-484 (EIRE…KPSL), and 530-575 (PDHF…IKRT). Residues 595-645 (EEKQKEIKKNLKKYYAAFEQKDRLRLTRASKELLEKRSQLRETFMEYRNKR) are a coiled coil.

It belongs to the eIF-3 subunit B family. Component of the eukaryotic translation initiation factor 3 (eIF-3) complex. The eIF-3 complex interacts with pix. Interacts with mxt.

The protein resides in the cytoplasm. RNA-binding component of the eukaryotic translation initiation factor 3 (eIF-3) complex, which is involved in protein synthesis of a specialized repertoire of mRNAs and, together with other initiation factors, stimulates binding of mRNA and methionyl-tRNAi to the 40S ribosome. The eIF-3 complex specifically targets and initiates translation of a subset of mRNAs involved in cell proliferation. This chain is Eukaryotic translation initiation factor 3 subunit B, found in Drosophila yakuba (Fruit fly).